Here is a 671-residue protein sequence, read N- to C-terminus: DNA ligase (671 aa).

Residues 32-36, 81-82, and Glu113 each bind NAD(+); these read DAEYD and SL. Lys115 serves as the catalytic N6-AMP-lysine intermediate. 4 residues coordinate NAD(+): Arg136, Glu173, Lys290, and Lys314. Zn(2+)-binding residues include Cys408, Cys411, Cys426, and Cys432. The 79-residue stretch at 593–671 folds into the BRCT domain; the sequence is EIDSPFAGKT…EAEMLRLLGS (79 aa).

It belongs to the NAD-dependent DNA ligase family. LigA subfamily. Mg(2+) is required as a cofactor. Requires Mn(2+) as cofactor.

The enzyme catalyses NAD(+) + (deoxyribonucleotide)n-3'-hydroxyl + 5'-phospho-(deoxyribonucleotide)m = (deoxyribonucleotide)n+m + AMP + beta-nicotinamide D-nucleotide.. Functionally, DNA ligase that catalyzes the formation of phosphodiester linkages between 5'-phosphoryl and 3'-hydroxyl groups in double-stranded DNA using NAD as a coenzyme and as the energy source for the reaction. It is essential for DNA replication and repair of damaged DNA. The protein is DNA ligase of Shigella dysenteriae serotype 1 (strain Sd197).